The sequence spans 127 residues: uncharacterized protein (127 aa).

This is an uncharacterized protein from Thermoproteus tenax (TTV1).